We begin with the raw amino-acid sequence, 160 residues long: Protein-export protein SecB (160 aa).

The protein belongs to the SecB family. As to quaternary structure, homotetramer, a dimer of dimers. One homotetramer interacts with 1 SecA dimer.

The protein resides in the cytoplasm. One of the proteins required for the normal export of preproteins out of the cell cytoplasm. It is a molecular chaperone that binds to a subset of precursor proteins, maintaining them in a translocation-competent state. It also specifically binds to its receptor SecA. This Beijerinckia indica subsp. indica (strain ATCC 9039 / DSM 1715 / NCIMB 8712) protein is Protein-export protein SecB.